We begin with the raw amino-acid sequence, 132 residues long: Mediator of RNA polymerase II transcription subunit 11 (132 aa).

It belongs to the Mediator complex subunit 11 family. Component of the Mediator complex.

Its subcellular location is the nucleus. Its function is as follows. Component of the Mediator complex, a coactivator involved in the regulated transcription of nearly all RNA polymerase II-dependent genes. Mediator functions as a bridge to convey information from gene-specific regulatory proteins to the basal RNA polymerase II transcription machinery. Mediator is recruited to promoters by direct interactions with regulatory proteins and serves as a scaffold for theQ9P086 assembly of a functional pre-initiation complex with RNA polymerase II and the general transcription factors. This chain is Mediator of RNA polymerase II transcription subunit 11 (MED11), found in Aedes aegypti (Yellowfever mosquito).